A 908-amino-acid polypeptide reads, in one-letter code: Mechanosensitive ion channel protein 8 (908 aa).

Over residues 1–25 (MDFRNSFKSHSSYKQIRSPGDQSEP) the composition is skewed to polar residues. Disordered regions lie at residues 1 to 88 (MDFR…HTAV), 148 to 172 (DQENDDVSHQTMPTPTSTARTSFDA), 190 to 221 (VAGSVPSSSSHSSSSSSATMRTNQDQPQLQEE), and 242 to 265 (VKTRSRLQDPPREEETPYSGWRSG). Positions 31-70 (PILHDHHPDHSGMVVDDQKPDSTRSSLDDGRNAPVERDAS) are enriched in basic and acidic residues. Composition is skewed to polar residues over residues 75–85 (QDNTTGTSTDH) and 156–171 (HQTMPTPTSTARTSFD). The segment covering 196–206 (SSSSHSSSSSS) has biased composition (low complexity). Over residues 207-218 (ATMRTNQDQPQL) the composition is skewed to polar residues. Residues 247-256 (RLQDPPREEE) show a composition bias toward basic and acidic residues. The next 6 helical transmembrane spans lie at 298–318 (AITLLQWLSLVAIIAALACSL), 341–361 (LVLICGRLVSGWGIRIVVFFI), 381–401 (AVQNCLWLGLVLLAWHFLFDK), 411–431 (FLPYVTKILVCFLLSTILWLI), 673–693 (MINIVTAIVIVVIWLVLLEIA), and 709–729 (AFIFGNTVKTVFESIIFLFIV).

Belongs to the MscS (TC 1.A.23) family. In terms of tissue distribution, expressed in tricellular and mature pollen, and in germinating tube. Not detected in leaves or roots.

The protein resides in the cell membrane. Its subcellular location is the endomembrane system. Its activity is regulated as follows. Not regulated by MgCl(2), ruthenium red or tetramethylammonium-Cl. Functionally, mechanosensitive channel that opens in response to stretch forces in the membrane lipid bilayer. Exhibits a 6.3-fold preference for chloride over sodium. Regulates osmotic forces during pollen hydration and germination. In Arabidopsis thaliana (Mouse-ear cress), this protein is Mechanosensitive ion channel protein 8.